The sequence spans 332 residues: Protein pbn1 (332 aa).

Residues 1 to 301 are Lumenal-facing; it reads MDLQRTNQDT…SIPIADLSYK (301 aa). 4 N-linked (GlcNAc...) asparagine glycosylation sites follow: asparagine 36, asparagine 56, asparagine 112, and asparagine 206. A helical membrane pass occupies residues 302 to 324; it reads HVVEWVTNGVAIFSFFYLLLYLW. Residues 325-332 are Cytoplasmic-facing; the sequence is KRFRYAKD.

It belongs to the PIGX family.

Its subcellular location is the endoplasmic reticulum membrane. It participates in glycolipid biosynthesis; glycosylphosphatidylinositol-anchor biosynthesis. Its function is as follows. Required for proper folding and/or the stability of a subset of proteins in the endoplasmic reticulum. Component of glycosylphosphatidylinositol-mannosyltransferase 1 which transfers the first of the 4 mannoses in the GPI-anchor precursors during GPI-anchor biosynthesis. Probably acts by stabilizing the mannosyltransferase gpi14. This is Protein pbn1 (pbn1) from Schizosaccharomyces pombe (strain 972 / ATCC 24843) (Fission yeast).